Reading from the N-terminus, the 215-residue chain is Leucyl/phenylalanyl-tRNA--protein transferase (215 aa).

It belongs to the L/F-transferase family.

It localises to the cytoplasm. It carries out the reaction N-terminal L-lysyl-[protein] + L-leucyl-tRNA(Leu) = N-terminal L-leucyl-L-lysyl-[protein] + tRNA(Leu) + H(+). It catalyses the reaction N-terminal L-arginyl-[protein] + L-leucyl-tRNA(Leu) = N-terminal L-leucyl-L-arginyl-[protein] + tRNA(Leu) + H(+). The enzyme catalyses L-phenylalanyl-tRNA(Phe) + an N-terminal L-alpha-aminoacyl-[protein] = an N-terminal L-phenylalanyl-L-alpha-aminoacyl-[protein] + tRNA(Phe). Functionally, functions in the N-end rule pathway of protein degradation where it conjugates Leu, Phe and, less efficiently, Met from aminoacyl-tRNAs to the N-termini of proteins containing an N-terminal arginine or lysine. This chain is Leucyl/phenylalanyl-tRNA--protein transferase, found in Campylobacter jejuni subsp. doylei (strain ATCC BAA-1458 / RM4099 / 269.97).